Consider the following 584-residue polypeptide: uncharacterized protein (584 aa).

PbH1 repeat units follow at residues 100-128 (QENI…RSTH), 139-161 (CSNV…IVSP), 173-195 (SEQI…SITG), 196-225 (CDMV…DIEG), 236-266 (PINV…LIEG), 313-333 (TSDA…IDVR), 334-356 (GKSV…LVYQ), 357-382 (SSDV…GLRA), 406-427 (GGNM…WIAQ), 456-478 (NAGA…YCST), and 529-554 (SAGS…QTNT).

This is an uncharacterized protein from Bacillus subtilis (strain 168).